The primary structure comprises 659 residues: Biosynthetic arginine decarboxylase 2 (659 aa).

At Lys-119 the chain carries N6-(pyridoxal phosphate)lysine. 311–321 (LNVGGGLAVDY) provides a ligand contact to substrate.

It belongs to the Orn/Lys/Arg decarboxylase class-II family. SpeA subfamily. Requires Mg(2+) as cofactor. Pyridoxal 5'-phosphate serves as cofactor.

It carries out the reaction L-arginine + H(+) = agmatine + CO2. Functionally, catalyzes the biosynthesis of agmatine from arginine. The chain is Biosynthetic arginine decarboxylase 2 (speA2) from Synechocystis sp. (strain ATCC 27184 / PCC 6803 / Kazusa).